Here is an 81-residue protein sequence, read N- to C-terminus: Penaeidin-3j (81 aa).

The N-terminal stretch at 1-19 (MRLVVCLVFLASFALVCQG) is a signal peptide. Gln-20 carries the pyrrolidone carboxylic acid modification. Disulfide bonds link Cys-50-Cys-65, Cys-54-Cys-72, and Cys-66-Cys-73. Ser-80 bears the Serine amide mark.

Belongs to the penaeidin family.

It localises to the cytoplasmic granule. Functionally, antibacterial and antifungal activity. Presents chitin-binding activity. This chain is Penaeidin-3j, found in Penaeus vannamei (Whiteleg shrimp).